Reading from the N-terminus, the 861-residue chain is Glucans biosynthesis glucosyltransferase H (861 aa).

Helical transmembrane passes span 142–162 (FILL…MKGI), 188–208 (VLPY…FCWV), 516–536 (VFLT…FLVL), 573–593 (LFST…MLIW), 600–620 (FGGV…SVLL), and 683–703 (FLWW…VSVI).

Belongs to the glycosyltransferase 2 family. OpgH subfamily.

It is found in the cell inner membrane. It participates in glycan metabolism; osmoregulated periplasmic glucan (OPG) biosynthesis. Functionally, involved in the biosynthesis of osmoregulated periplasmic glucans (OPGs). This Pseudomonas aeruginosa (strain UCBPP-PA14) protein is Glucans biosynthesis glucosyltransferase H.